The chain runs to 542 residues: DM7 family protein CG15333 (542 aa).

This sequence belongs to the DM7 family.

The sequence is that of DM7 family protein CG15333 from Drosophila melanogaster (Fruit fly).